Consider the following 296-residue polypeptide: Bifunctional protein FolD (296 aa).

NADP(+) contacts are provided by residues 166–168 (GRS), Ser191, and Ile232.

Belongs to the tetrahydrofolate dehydrogenase/cyclohydrolase family. In terms of assembly, homodimer.

The enzyme catalyses (6R)-5,10-methylene-5,6,7,8-tetrahydrofolate + NADP(+) = (6R)-5,10-methenyltetrahydrofolate + NADPH. It catalyses the reaction (6R)-5,10-methenyltetrahydrofolate + H2O = (6R)-10-formyltetrahydrofolate + H(+). Its pathway is one-carbon metabolism; tetrahydrofolate interconversion. Catalyzes the oxidation of 5,10-methylenetetrahydrofolate to 5,10-methenyltetrahydrofolate and then the hydrolysis of 5,10-methenyltetrahydrofolate to 10-formyltetrahydrofolate. The polypeptide is Bifunctional protein FolD (Cereibacter sphaeroides (strain ATCC 17025 / ATH 2.4.3) (Rhodobacter sphaeroides)).